Here is a 1337-residue protein sequence, read N- to C-terminus: uncharacterized protein (1337 aa).

Disordered stretches follow at residues methionine 1–alanine 94 and alanine 119–phenylalanine 174. 2 stretches are compositionally biased toward low complexity: residues serine 18–serine 37 and serine 68–serine 79. The span at asparagine 80–alanine 94 shows a compositional bias: polar residues. Residues proline 123–serine 147 are compositionally biased toward low complexity. Basic and acidic residues predominate over residues asparagine 157 to proline 167. The next 6 membrane-spanning stretches (helical) occupy residues glycine 209–alanine 229, phenylalanine 241–tryptophan 261, phenylalanine 267–alanine 287, valine 328–isoleucine 348, cysteine 361–phenylalanine 381, and leucine 387–isoleucine 407. Disordered regions lie at residues serine 623–serine 662 and tyrosine 868–histidine 894. Positions arginine 626–lysine 644 are enriched in polar residues. Residues tyrosine 868–methionine 880 show a composition bias toward basic and acidic residues. Helical transmembrane passes span methionine 917 to cysteine 937, isoleucine 975 to histidine 995, leucine 997 to isoleucine 1017, phenylalanine 1021 to threonine 1041, phenylalanine 1066 to arginine 1086, and phenylalanine 1275 to isoleucine 1295.

It is found in the membrane. This is an uncharacterized protein from Schizosaccharomyces pombe (strain 972 / ATCC 24843) (Fission yeast).